A 365-amino-acid chain; its full sequence is Protein-glutamate methylesterase/protein-glutamine glutaminase (365 aa).

One can recognise a Response regulatory domain in the interval Lys-5 to Lys-122. 4-aspartylphosphate is present on Asp-56. Residues Ile-146 to Ser-155 are compositionally biased toward basic and acidic residues. Residues Ile-146–Leu-167 are disordered. Residues Thr-156–Leu-167 show a composition bias toward polar residues. In terms of domain architecture, CheB-type methylesterase spans Ile-177 to Ile-363. Catalysis depends on residues Ser-182, His-208, and Asp-305.

The protein belongs to the CheB family. Phosphorylated by CheA. Phosphorylation of the N-terminal regulatory domain activates the methylesterase activity.

The protein resides in the cytoplasm. It catalyses the reaction [protein]-L-glutamate 5-O-methyl ester + H2O = L-glutamyl-[protein] + methanol + H(+). The catalysed reaction is L-glutaminyl-[protein] + H2O = L-glutamyl-[protein] + NH4(+). Involved in chemotaxis. Part of a chemotaxis signal transduction system that modulates chemotaxis in response to various stimuli. Catalyzes the demethylation of specific methylglutamate residues introduced into the chemoreceptors (methyl-accepting chemotaxis proteins or MCP) by CheR. Also mediates the irreversible deamidation of specific glutamine residues to glutamic acid. The chain is Protein-glutamate methylesterase/protein-glutamine glutaminase from Methanococcus maripaludis (strain DSM 14266 / JCM 13030 / NBRC 101832 / S2 / LL).